A 299-amino-acid polypeptide reads, in one-letter code: NAD kinase (299 aa).

The active-site Proton acceptor is the aspartate 71. Residues aspartate 71–glycine 72, asparagine 145–aspartate 146, arginine 173, aspartate 175, threonine 186–serine 191, alanine 210, and glutamine 248 each bind NAD(+).

Belongs to the NAD kinase family. A divalent metal cation is required as a cofactor.

It localises to the cytoplasm. The catalysed reaction is NAD(+) + ATP = ADP + NADP(+) + H(+). In terms of biological role, involved in the regulation of the intracellular balance of NAD and NADP, and is a key enzyme in the biosynthesis of NADP. Catalyzes specifically the phosphorylation on 2'-hydroxyl of the adenosine moiety of NAD to yield NADP. In Bordetella bronchiseptica (strain ATCC BAA-588 / NCTC 13252 / RB50) (Alcaligenes bronchisepticus), this protein is NAD kinase.